The following is a 665-amino-acid chain: Protein kinase domain-containing protein ppk2 (665 aa).

4 disordered regions span residues 42 to 63 (PNDSIIDLQPSRPAPEPPKKKF), 82 to 152 (GNST…LSRS), 187 to 217 (LNSQALSSPPVPTTPDEVSTNRLSSSTSSMN), and 286 to 343 (AESL…VGHP). Residues 82–104 (GNSTRSPPFHLQNQKSNGQSEVW) are compositionally biased toward polar residues. Composition is skewed to low complexity over residues 137–152 (SLSRRNSKKSSTLSRS) and 206–217 (TNRLSSSTSSMN). Polar residues predominate over residues 294 to 316 (SATTIQQGDVSSYPLSRSVSTPV). Ser358 is subject to Phosphoserine. Residues 388 to 637 (YTDFTKICQQ…NMLLETSSFL (250 aa)) enclose the Protein kinase domain. Residues 394-402 (ICQQDTVGT) and Lys417 each bind ATP.

The protein resides in the cytoplasm. This chain is Protein kinase domain-containing protein ppk2 (ppk2), found in Schizosaccharomyces pombe (strain 972 / ATCC 24843) (Fission yeast).